A 324-amino-acid chain; its full sequence is Glycerol-3-phosphate dehydrogenase [NAD(P)+] (324 aa).

NADPH-binding residues include Ser-10, Phe-11, Arg-31, and Lys-106. Sn-glycerol 3-phosphate is bound by residues Lys-106, Gly-134, and Ser-136. Position 138 (Ala-138) interacts with NADPH. Positions 189, 244, 254, 255, and 256 each coordinate sn-glycerol 3-phosphate. Catalysis depends on Lys-189, which acts as the Proton acceptor. Arg-255 provides a ligand contact to NADPH. Positions 279 and 281 each coordinate NADPH.

This sequence belongs to the NAD-dependent glycerol-3-phosphate dehydrogenase family.

The protein resides in the cytoplasm. The enzyme catalyses sn-glycerol 3-phosphate + NAD(+) = dihydroxyacetone phosphate + NADH + H(+). The catalysed reaction is sn-glycerol 3-phosphate + NADP(+) = dihydroxyacetone phosphate + NADPH + H(+). It participates in membrane lipid metabolism; glycerophospholipid metabolism. Functionally, catalyzes the reduction of the glycolytic intermediate dihydroxyacetone phosphate (DHAP) to sn-glycerol 3-phosphate (G3P), the key precursor for phospholipid synthesis. This is Glycerol-3-phosphate dehydrogenase [NAD(P)+] from Ehrlichia canis (strain Jake).